Reading from the N-terminus, the 222-residue chain is MSNFEMAGTGSSRNNEEDNQQNTNWVWYKHTNNNLSTSHNNQIWQQPSLDLYPGQIDVCDMTTSSRSLTISCQECGNQAKKGCTHGRCRTCCKSNGLHCPTHVRSTWIPIAKRRERQQQLQTPTSNPTGGSGRVGKYRDINQHATLDSSGLEMGETRFPDEVSSDALFRCVRMSGTDDGEGQYAYQTTVGIAGHLFKGILYNQGPENKSMRSTQFYENPPRS.

Residues C72, C75, C83, C88, C92, and C99 each contribute to the Zn(2+) site. Residues C72 to C99 constitute a DNA-binding region (zn(2)-C6 fungal-type; degenerate). The interval R114 to Y137 is disordered. Over residues Q118–T128 the composition is skewed to polar residues. The short motif at I191–H194 is the Required for homo- and heterodimerization element.

It belongs to the SHI protein family. In terms of tissue distribution, expressed in cotyledon tips, leaf primordia, hydathodes, stipules, and lateral root primordia and weakly at the edges of petals and sepals.

It localises to the nucleus. Functionally, transcription activator that binds DNA on 5'-ACTCTAC-3' and promotes auxin homeostasis-regulating gene expression (e.g. YUC genes), as well as genes affecting stamen development, cell expansion and timing of flowering. Synergistically with other SHI-related proteins, regulates gynoecium, stamen and leaf development in a dose-dependent manner, controlling apical-basal patterning. Promotes style and stigma formation, and influences vascular development during gynoecium development. May also have a role in the formation and/or maintenance of the shoot apical meristem (SAM). In Arabidopsis thaliana (Mouse-ear cress), this protein is Protein SHI RELATED SEQUENCE 4 (SRS4).